A 385-amino-acid chain; its full sequence is 1-deoxy-D-xylulose 5-phosphate reductoisomerase (385 aa).

T10, G11, S12, I13, K37, and N124 together coordinate NADPH. K125 contacts 1-deoxy-D-xylulose 5-phosphate. E126 is an NADPH binding site. D150 serves as a coordination point for Mn(2+). Residues S151, E152, S176, and H199 each coordinate 1-deoxy-D-xylulose 5-phosphate. E152 lines the Mn(2+) pocket. An NADPH-binding site is contributed by G205. 1-deoxy-D-xylulose 5-phosphate contacts are provided by S212, N217, K218, and E221. E221 contacts Mn(2+).

It belongs to the DXR family. Mg(2+) serves as cofactor. It depends on Mn(2+) as a cofactor.

It carries out the reaction 2-C-methyl-D-erythritol 4-phosphate + NADP(+) = 1-deoxy-D-xylulose 5-phosphate + NADPH + H(+). It functions in the pathway isoprenoid biosynthesis; isopentenyl diphosphate biosynthesis via DXP pathway; isopentenyl diphosphate from 1-deoxy-D-xylulose 5-phosphate: step 1/6. Catalyzes the NADPH-dependent rearrangement and reduction of 1-deoxy-D-xylulose-5-phosphate (DXP) to 2-C-methyl-D-erythritol 4-phosphate (MEP). The sequence is that of 1-deoxy-D-xylulose 5-phosphate reductoisomerase from Clostridium botulinum (strain Langeland / NCTC 10281 / Type F).